The chain runs to 102 residues: Putative pterin-4-alpha-carbinolamine dehydratase (102 aa).

It belongs to the pterin-4-alpha-carbinolamine dehydratase family.

The enzyme catalyses (4aS,6R)-4a-hydroxy-L-erythro-5,6,7,8-tetrahydrobiopterin = (6R)-L-erythro-6,7-dihydrobiopterin + H2O. The chain is Putative pterin-4-alpha-carbinolamine dehydratase from Burkholderia cenocepacia (strain ATCC BAA-245 / DSM 16553 / LMG 16656 / NCTC 13227 / J2315 / CF5610) (Burkholderia cepacia (strain J2315)).